Here is a 478-residue protein sequence, read N- to C-terminus: DNA-directed RNA polymerase subunit alpha (478 aa).

The alpha N-terminal domain (alpha-NTD) stretch occupies residues 1–341; sequence MNKKIQDFFL…LDCMRLLNYE (341 aa). An alpha C-terminal domain (alpha-CTD) region spans residues 365-478; it reads RFYNSREDKT…KLGSRNEKNL (114 aa).

The protein belongs to the RNA polymerase alpha chain family. In plastids the minimal PEP RNA polymerase catalytic core is composed of four subunits: alpha, beta, beta', and beta''. When a (nuclear-encoded) sigma factor is associated with the core the holoenzyme is formed, which can initiate transcription.

It is found in the plastid. It localises to the chloroplast. It catalyses the reaction RNA(n) + a ribonucleoside 5'-triphosphate = RNA(n+1) + diphosphate. Its function is as follows. DNA-dependent RNA polymerase catalyzes the transcription of DNA into RNA using the four ribonucleoside triphosphates as substrates. This is DNA-directed RNA polymerase subunit alpha (rpoA) from Tetradesmus obliquus (Green alga).